The sequence spans 96 residues: CRISPR-associated endoribonuclease Cas2 (96 aa).

Mg(2+) is bound at residue Asp8.

This sequence belongs to the CRISPR-associated endoribonuclease Cas2 protein family. Homodimer, forms a heterotetramer with a Cas1 homodimer. Mg(2+) serves as cofactor.

CRISPR (clustered regularly interspaced short palindromic repeat), is an adaptive immune system that provides protection against mobile genetic elements (viruses, transposable elements and conjugative plasmids). CRISPR clusters contain sequences complementary to antecedent mobile elements and target invading nucleic acids. CRISPR clusters are transcribed and processed into CRISPR RNA (crRNA). Functions as a ssRNA-specific endoribonuclease. Involved in the integration of spacer DNA into the CRISPR cassette. This Chlorobaculum tepidum (strain ATCC 49652 / DSM 12025 / NBRC 103806 / TLS) (Chlorobium tepidum) protein is CRISPR-associated endoribonuclease Cas2.